The chain runs to 318 residues: Ribosomal RNA small subunit methyltransferase H (318 aa).

S-adenosyl-L-methionine contacts are provided by residues glycine 42–histidine 44, aspartate 62, phenylalanine 86, aspartate 108, and glutamine 115.

The protein belongs to the methyltransferase superfamily. RsmH family.

The protein resides in the cytoplasm. It carries out the reaction cytidine(1402) in 16S rRNA + S-adenosyl-L-methionine = N(4)-methylcytidine(1402) in 16S rRNA + S-adenosyl-L-homocysteine + H(+). Functionally, specifically methylates the N4 position of cytidine in position 1402 (C1402) of 16S rRNA. This is Ribosomal RNA small subunit methyltransferase H from Yersinia pestis (strain Pestoides F).